Consider the following 656-residue polypeptide: Nexilin (656 aa).

Disordered regions lie at residues 1-131 (MNDV…IEQD), 165-198 (RAAA…EEEC), and 215-284 (TEAK…VFKE). Positions 11-26 (LLSSSKPVPKSYVPKL) are enriched in low complexity. The span at 27–78 (GKGDVKDKFEAMQRAREERNQRRSRDEKQRRKEQYIREREWNRRKQEIKDML) shows a compositional bias: basic and acidic residues. Ser80 bears the Phosphoserine mark. Basic and acidic residues-rich tracts occupy residues 103 to 131 (GKFD…IEQD), 169 to 198 (NRKD…EEEC), and 216 to 269 (EAKK…RNMV). Phosphoserine is present on residues Ser221, Ser330, Ser337, and Ser345. Thr350 is modified (phosphothreonine). Disordered regions lie at residues 468–492 (NFHE…HKVN) and 529–564 (AALQ…APWF). 2 positions are modified to phosphoserine: Ser544 and Ser549. Thr551 carries the post-translational modification Phosphothreonine. Residues 562 to 650 (PWFKKPLRNT…GSAASTCILT (89 aa)) enclose the Ig-like domain.

Interacts with F-actin. As to expression, expressed in brain, testis, spleen and fibroblasts (at protein level). Not detected in liver, kidney or epithelial cells (at protein level).

The protein localises to the cytoplasm. Its subcellular location is the cytoskeleton. It is found in the cell junction. The protein resides in the adherens junction. It localises to the myofibril. The protein localises to the sarcomere. Its subcellular location is the z line. In terms of biological role, involved in regulating cell migration through association with the actin cytoskeleton. Has an essential role in the maintenance of Z line and sarcomere integrity. The sequence is that of Nexilin from Rattus norvegicus (Rat).